A 435-amino-acid polypeptide reads, in one-letter code: ATP-dependent protease ATPase subunit HslU (435 aa).

ATP contacts are provided by residues Ile-18, 60–65 (GVGKTE), Asp-248, Glu-313, and Arg-385.

The protein belongs to the ClpX chaperone family. HslU subfamily. In terms of assembly, a double ring-shaped homohexamer of HslV is capped on each side by a ring-shaped HslU homohexamer. The assembly of the HslU/HslV complex is dependent on binding of ATP.

It localises to the cytoplasm. In terms of biological role, ATPase subunit of a proteasome-like degradation complex; this subunit has chaperone activity. The binding of ATP and its subsequent hydrolysis by HslU are essential for unfolding of protein substrates subsequently hydrolyzed by HslV. HslU recognizes the N-terminal part of its protein substrates and unfolds these before they are guided to HslV for hydrolysis. This chain is ATP-dependent protease ATPase subunit HslU, found in Agrobacterium fabrum (strain C58 / ATCC 33970) (Agrobacterium tumefaciens (strain C58)).